The chain runs to 196 residues: Large ribosomal subunit protein uL5 (196 aa).

The protein belongs to the universal ribosomal protein uL5 family. As to quaternary structure, part of the 50S ribosomal subunit; part of the 5S rRNA/L5/L18/L25 subcomplex. Contacts the 5S rRNA and the P site tRNA. Forms a bridge to the 30S subunit in the 70S ribosome.

In terms of biological role, this is one of the proteins that bind and probably mediate the attachment of the 5S RNA into the large ribosomal subunit, where it forms part of the central protuberance. In the 70S ribosome it contacts protein S13 of the 30S subunit (bridge B1b), connecting the 2 subunits; this bridge is implicated in subunit movement. Contacts the P site tRNA; the 5S rRNA and some of its associated proteins might help stabilize positioning of ribosome-bound tRNAs. The protein is Large ribosomal subunit protein uL5 of Acidothermus cellulolyticus (strain ATCC 43068 / DSM 8971 / 11B).